Consider the following 66-residue polypeptide: Large ribosomal subunit protein bL33c (66 aa).

The protein belongs to the bacterial ribosomal protein bL33 family.

The protein localises to the plastid. Its subcellular location is the chloroplast. In Citrus sinensis (Sweet orange), this protein is Large ribosomal subunit protein bL33c.